An 88-amino-acid polypeptide reads, in one-letter code: MLPDHFSPLSGDIKLSVLALVVLVVLAQTAPDGWIRRCYYGTGRCRKSCKEIERKKEKCGEKHICCVPKEKDKLSHIHDQKETSELYI.

An N-terminal signal peptide occupies residues 1-27 (MLPDHFSPLSGDIKLSVLALVVLVVLA). Cystine bridges form between Cys38/Cys65, Cys45/Cys59, and Cys49/Cys66.

This sequence belongs to the beta-defensin family.

Its subcellular location is the secreted. In terms of biological role, has antibacterial activity. The chain is Beta-defensin 115 (DEFB115) from Homo sapiens (Human).